Consider the following 206-residue polypeptide: Glutathione S-transferase class-mu 28 kDa isozyme (206 aa).

In terms of domain architecture, GST N-terminal spans 1-81 (VKLIYFNGRG…FIARKHNMMG (81 aa)). Glutathione contacts are provided by residues Tyr-5, 5-6 (YF), Arg-11, 36-40 (WPKIK), Leu-48, 50-51 (IV), and 65-66 (ES). The region spanning 83–206 (TDDEYYIIEK…YLSERHATAF (124 aa)) is the GST C-terminal domain.

Belongs to the GST superfamily. Mu family. Homodimer.

It carries out the reaction RX + glutathione = an S-substituted glutathione + a halide anion + H(+). Conjugation of reduced glutathione to a wide number of exogenous and endogenous hydrophobic electrophiles. In terms of biological role, GST isoenzymes appear to play a central role in the parasite detoxification system. Other functions are also suspected including a role in increasing the solubility of haematin in the parasite gut. The sequence is that of Glutathione S-transferase class-mu 28 kDa isozyme from Schistosoma japonicum (Blood fluke).